Here is a 214-residue protein sequence, read N- to C-terminus: Ribonuclease HII (214 aa).

Residues glutamate 26 to arginine 214 form the RNase H type-2 domain. Residues aspartate 32, glutamate 33, and aspartate 124 each coordinate a divalent metal cation.

The protein belongs to the RNase HII family. Requires Mn(2+) as cofactor. Mg(2+) serves as cofactor.

The protein resides in the cytoplasm. The catalysed reaction is Endonucleolytic cleavage to 5'-phosphomonoester.. Functionally, endonuclease that specifically degrades the RNA of RNA-DNA hybrids. The protein is Ribonuclease HII of Burkholderia cenocepacia (strain HI2424).